The primary structure comprises 440 residues: Thymidine phosphorylase (440 aa).

The protein belongs to the thymidine/pyrimidine-nucleoside phosphorylase family. In terms of assembly, homodimer.

It carries out the reaction thymidine + phosphate = 2-deoxy-alpha-D-ribose 1-phosphate + thymine. The protein operates within pyrimidine metabolism; dTMP biosynthesis via salvage pathway; dTMP from thymine: step 1/2. In terms of biological role, the enzymes which catalyze the reversible phosphorolysis of pyrimidine nucleosides are involved in the degradation of these compounds and in their utilization as carbon and energy sources, or in the rescue of pyrimidine bases for nucleotide synthesis. The polypeptide is Thymidine phosphorylase (Salmonella paratyphi A (strain ATCC 9150 / SARB42)).